The primary structure comprises 1024 residues: Probable serine/threonine-protein kinase DDB_G0271682 (1024 aa).

Positions 187-261 (NIDNNNNNNN…RDNENNHNHQ (75 aa)) are disordered. Low complexity predominate over residues 190–244 (NNNNNNNNNNNNNNNNNNNNNNNNNNNNNNNNNNNNNNNNNNNNNNNNNNNNNNN). The segment covering 250-261 (RSRDNENNHNHQ) has biased composition (basic and acidic residues). Protein kinase domains lie at 360-609 (LLFI…LKLM) and 645-1018 (ILVT…ELLI). Residues 366-374 (IGSGACGEV) and Lys387 contribute to the ATP site. The active-site Proton acceptor is the Asp484. Residues 651–659 (VGGNVSGNV) and Lys719 contribute to the ATP site. Low complexity-rich tracts occupy residues 823–851 (NNNS…NNNN) and 862–874 (ENTN…TTTT). Positions 823 to 874 (NNNSNQNNNNNNNNNNNNNNNNNNNNNNNKKNDGGDDNGENTNTTTTTTTTT) are disordered.

This sequence belongs to the protein kinase superfamily. TKL Ser/Thr protein kinase family.

The catalysed reaction is L-seryl-[protein] + ATP = O-phospho-L-seryl-[protein] + ADP + H(+). It catalyses the reaction L-threonyl-[protein] + ATP = O-phospho-L-threonyl-[protein] + ADP + H(+). In Dictyostelium discoideum (Social amoeba), this protein is Probable serine/threonine-protein kinase DDB_G0271682.